Here is a 237-residue protein sequence, read N- to C-terminus: Ribonuclease PH (237 aa).

Phosphate is bound by residues Arg86 and 124 to 126; that span reads GTR.

The protein belongs to the RNase PH family. Homohexameric ring arranged as a trimer of dimers.

The catalysed reaction is tRNA(n+1) + phosphate = tRNA(n) + a ribonucleoside 5'-diphosphate. In terms of biological role, phosphorolytic 3'-5' exoribonuclease that plays an important role in tRNA 3'-end maturation. Removes nucleotide residues following the 3'-CCA terminus of tRNAs; can also add nucleotides to the ends of RNA molecules by using nucleoside diphosphates as substrates, but this may not be physiologically important. Probably plays a role in initiation of 16S rRNA degradation (leading to ribosome degradation) during starvation. This is Ribonuclease PH from Methylobacterium radiotolerans (strain ATCC 27329 / DSM 1819 / JCM 2831 / NBRC 15690 / NCIMB 10815 / 0-1).